A 224-amino-acid polypeptide reads, in one-letter code: Glutathione S-transferase U4 (224 aa).

Residues 6 to 85 (EDVKLLGFWA…YIDQIWKNNP (80 aa)) enclose the GST N-terminal domain. Residues 16–17 (SP), 42–43 (NK), 56–57 (KV), and 69–70 (ES) contribute to the glutathione site. One can recognise a GST C-terminal domain in the interval 90-217 (DPYEKAMALF…EEQIEHMKKV (128 aa)). Residue Thr-151 is modified to Phosphothreonine.

It belongs to the GST superfamily. Tau family.

The protein localises to the cytoplasm. The protein resides in the cytosol. The enzyme catalyses RX + glutathione = an S-substituted glutathione + a halide anion + H(+). Its function is as follows. May be involved in the conjugation of reduced glutathione to a wide number of exogenous and endogenous hydrophobic electrophiles and have a detoxification role against certain herbicides. The sequence is that of Glutathione S-transferase U4 (GSTU4) from Arabidopsis thaliana (Mouse-ear cress).